The following is a 250-amino-acid chain: Triosephosphate isomerase (250 aa).

9 to 11 (NWK) lines the substrate pocket. The active-site Electrophile is His-95. Glu-167 functions as the Proton acceptor in the catalytic mechanism. Residues Gly-173, Ser-212, and 233–234 (GG) each bind substrate.

The protein belongs to the triosephosphate isomerase family. In terms of assembly, homodimer.

It localises to the cytoplasm. The enzyme catalyses D-glyceraldehyde 3-phosphate = dihydroxyacetone phosphate. It functions in the pathway carbohydrate biosynthesis; gluconeogenesis. The protein operates within carbohydrate degradation; glycolysis; D-glyceraldehyde 3-phosphate from glycerone phosphate: step 1/1. Functionally, involved in the gluconeogenesis. Catalyzes stereospecifically the conversion of dihydroxyacetone phosphate (DHAP) to D-glyceraldehyde-3-phosphate (G3P). The sequence is that of Triosephosphate isomerase from Nitrosococcus oceani (strain ATCC 19707 / BCRC 17464 / JCM 30415 / NCIMB 11848 / C-107).